The primary structure comprises 213 residues: Thiamine-phosphate synthase (213 aa).

4-amino-2-methyl-5-(diphosphooxymethyl)pyrimidine is bound by residues 41–45 (QFRVK) and Asn-73. Mg(2+) is bound by residues Asp-74 and Asp-93. Position 112 (Thr-112) interacts with 4-amino-2-methyl-5-(diphosphooxymethyl)pyrimidine. 139–141 (SAT) serves as a coordination point for 2-[(2R,5Z)-2-carboxy-4-methylthiazol-5(2H)-ylidene]ethyl phosphate. 4-amino-2-methyl-5-(diphosphooxymethyl)pyrimidine is bound at residue Lys-142. 2-[(2R,5Z)-2-carboxy-4-methylthiazol-5(2H)-ylidene]ethyl phosphate is bound at residue Gly-171.

This sequence belongs to the thiamine-phosphate synthase family. Requires Mg(2+) as cofactor.

The enzyme catalyses 2-[(2R,5Z)-2-carboxy-4-methylthiazol-5(2H)-ylidene]ethyl phosphate + 4-amino-2-methyl-5-(diphosphooxymethyl)pyrimidine + 2 H(+) = thiamine phosphate + CO2 + diphosphate. The catalysed reaction is 2-(2-carboxy-4-methylthiazol-5-yl)ethyl phosphate + 4-amino-2-methyl-5-(diphosphooxymethyl)pyrimidine + 2 H(+) = thiamine phosphate + CO2 + diphosphate. It catalyses the reaction 4-methyl-5-(2-phosphooxyethyl)-thiazole + 4-amino-2-methyl-5-(diphosphooxymethyl)pyrimidine + H(+) = thiamine phosphate + diphosphate. The protein operates within cofactor biosynthesis; thiamine diphosphate biosynthesis; thiamine phosphate from 4-amino-2-methyl-5-diphosphomethylpyrimidine and 4-methyl-5-(2-phosphoethyl)-thiazole: step 1/1. Functionally, condenses 4-methyl-5-(beta-hydroxyethyl)thiazole monophosphate (THZ-P) and 2-methyl-4-amino-5-hydroxymethyl pyrimidine pyrophosphate (HMP-PP) to form thiamine monophosphate (TMP). The protein is Thiamine-phosphate synthase of Erythrobacter litoralis (strain HTCC2594).